Reading from the N-terminus, the 88-residue chain is Defensin-like protein 98 (88 aa).

An N-terminal signal peptide occupies residues 1–29 (MGSLRVSTVVIAVVACLSILLISPTEVDG). Intrachain disulfides connect Cys-33-Cys-76, Cys-40-Cys-62, Cys-46-Cys-73, and Cys-50-Cys-75.

This sequence belongs to the DEFL family.

It localises to the secreted. The protein is Defensin-like protein 98 of Arabidopsis thaliana (Mouse-ear cress).